The sequence spans 227 residues: Pyridoxal 5'-phosphate synthase subunit PdxT (227 aa).

52 to 54 (GES) lines the L-glutamine pocket. Residue C84 is the Nucleophile of the active site. Residues R118 and 149 to 150 (IR) each bind L-glutamine. Residues H189 and E191 each act as charge relay system in the active site.

The protein belongs to the glutaminase PdxT/SNO family. In terms of assembly, in the presence of PdxS, forms a dodecamer of heterodimers. Only shows activity in the heterodimer.

It carries out the reaction aldehydo-D-ribose 5-phosphate + D-glyceraldehyde 3-phosphate + L-glutamine = pyridoxal 5'-phosphate + L-glutamate + phosphate + 3 H2O + H(+). It catalyses the reaction L-glutamine + H2O = L-glutamate + NH4(+). The protein operates within cofactor biosynthesis; pyridoxal 5'-phosphate biosynthesis. Catalyzes the hydrolysis of glutamine to glutamate and ammonia as part of the biosynthesis of pyridoxal 5'-phosphate. The resulting ammonia molecule is channeled to the active site of PdxS. The chain is Pyridoxal 5'-phosphate synthase subunit PdxT from Renibacterium salmoninarum (strain ATCC 33209 / DSM 20767 / JCM 11484 / NBRC 15589 / NCIMB 2235).